A 234-amino-acid chain; its full sequence is Leucyl/phenylalanyl-tRNA--protein transferase (234 aa).

This sequence belongs to the L/F-transferase family.

Its subcellular location is the cytoplasm. It catalyses the reaction N-terminal L-lysyl-[protein] + L-leucyl-tRNA(Leu) = N-terminal L-leucyl-L-lysyl-[protein] + tRNA(Leu) + H(+). The enzyme catalyses N-terminal L-arginyl-[protein] + L-leucyl-tRNA(Leu) = N-terminal L-leucyl-L-arginyl-[protein] + tRNA(Leu) + H(+). The catalysed reaction is L-phenylalanyl-tRNA(Phe) + an N-terminal L-alpha-aminoacyl-[protein] = an N-terminal L-phenylalanyl-L-alpha-aminoacyl-[protein] + tRNA(Phe). Its function is as follows. Functions in the N-end rule pathway of protein degradation where it conjugates Leu, Phe and, less efficiently, Met from aminoacyl-tRNAs to the N-termini of proteins containing an N-terminal arginine or lysine. The sequence is that of Leucyl/phenylalanyl-tRNA--protein transferase from Escherichia fergusonii (strain ATCC 35469 / DSM 13698 / CCUG 18766 / IAM 14443 / JCM 21226 / LMG 7866 / NBRC 102419 / NCTC 12128 / CDC 0568-73).